Here is a 304-residue protein sequence, read N- to C-terminus: Murein tetrapeptide carboxypeptidase (304 aa).

The Nucleophile role is filled by Ser-106. Active-site charge relay system residues include Glu-200 and His-270.

Belongs to the peptidase S66 family.

The protein localises to the cytoplasm. It carries out the reaction N-acetyl-D-glucosaminyl-N-acetylmuramoyl-L-alanyl-meso-2,6-diaminoheptanedioyl-D-alanine + H2O = N-acetyl-D-glucosaminyl-N-acetylmuramoyl-L-alanyl-meso-2,6-diaminoheptanedioate + D-alanine. It participates in cell wall biogenesis; peptidoglycan recycling. Releases the terminal D-alanine residue from the cytoplasmic tetrapeptide recycling product L-Ala-gamma-D-Glu-meso-Dap-D-Ala. Can also cleave D-Ala from murein derivatives containing the tetrapeptide, i.e. MurNAc-tetrapeptide, UDP-MurNAc-tetrapeptide, GlcNAc-MurNAc-tetrapeptide, and GlcNAc-anhMurNAc-tetrapeptide. Does not act on murein sacculi or cross-linked muropeptides. The tripeptides produced by the LcdA reaction can then be reused as peptidoglycan building blocks; LcdA is thereby involved in murein recycling. This Escherichia coli O157:H7 protein is Murein tetrapeptide carboxypeptidase (ldcA).